A 274-amino-acid polypeptide reads, in one-letter code: 2,3,4,5-tetrahydropyridine-2,6-dicarboxylate N-succinyltransferase (274 aa).

The substrate site is built by Arg-104 and Asp-141.

It belongs to the transferase hexapeptide repeat family. As to quaternary structure, homotrimer.

The protein localises to the cytoplasm. It carries out the reaction (S)-2,3,4,5-tetrahydrodipicolinate + succinyl-CoA + H2O = (S)-2-succinylamino-6-oxoheptanedioate + CoA. It participates in amino-acid biosynthesis; L-lysine biosynthesis via DAP pathway; LL-2,6-diaminopimelate from (S)-tetrahydrodipicolinate (succinylase route): step 1/3. This Salmonella arizonae (strain ATCC BAA-731 / CDC346-86 / RSK2980) protein is 2,3,4,5-tetrahydropyridine-2,6-dicarboxylate N-succinyltransferase.